We begin with the raw amino-acid sequence, 203 residues long: Undecaprenyl phosphate transporter A (203 aa).

The next 5 helical transmembrane spans lie at 16–36 (AIFI…EIIL), 48–68 (LSIL…LLIL), 108–128 (YGVW…LITI), 137–157 (VVTF…GLIL), and 173–193 (LHTY…YFAI).

This sequence belongs to the DedA family.

The protein localises to the cell membrane. In terms of biological role, flippase that catalyzes the transport of undecaprenyl phosphate (UndP) across the cytoplasmic membrane, from the external side to the cytoplasmic side. Is involved in UndP recycling during peptidoglycan synthesis. In Staphylococcus aureus (strain NCTC 8325 / PS 47), this protein is Undecaprenyl phosphate transporter A.